Here is a 273-residue protein sequence, read N- to C-terminus: Putative carboxymethylenebutenolidase (273 aa).

Residues cysteine 130, aspartate 191, and histidine 223 contribute to the active site.

Belongs to the dienelactone hydrolase family.

It carries out the reaction 2-(5-oxo-2,5-dihydrofuran-2-ylidene)acetate + H2O = 4-oxohex-2-enedioate + H(+). This chain is Putative carboxymethylenebutenolidase, found in Saccharomyces cerevisiae (strain ATCC 204508 / S288c) (Baker's yeast).